Here is a 508-residue protein sequence, read N- to C-terminus: Photosystem II CP47 reaction center protein (508 aa).

The next 6 helical transmembrane spans lie at 21–36, 101–115, 140–156, 203–218, 237–252, and 457–472; these read AVHIMHTALVSGWAGS, IVFSGLCFLAAIWHW, GIHLFLAGVACFGFGAF, IAAGTLGILAGLFHLS, VLSSSIAAVFFAAFVV, and TFALLFFFGHIWHGAR.

It belongs to the PsbB/PsbC family. PsbB subfamily. PSII is composed of 1 copy each of membrane proteins PsbA, PsbB, PsbC, PsbD, PsbE, PsbF, PsbH, PsbI, PsbJ, PsbK, PsbL, PsbM, PsbT, PsbX, PsbY, PsbZ, Psb30/Ycf12, at least 3 peripheral proteins of the oxygen-evolving complex and a large number of cofactors. It forms dimeric complexes. Binds multiple chlorophylls. PSII binds additional chlorophylls, carotenoids and specific lipids. is required as a cofactor.

The protein localises to the plastid. It is found in the chloroplast thylakoid membrane. Functionally, one of the components of the core complex of photosystem II (PSII). It binds chlorophyll and helps catalyze the primary light-induced photochemical processes of PSII. PSII is a light-driven water:plastoquinone oxidoreductase, using light energy to abstract electrons from H(2)O, generating O(2) and a proton gradient subsequently used for ATP formation. This Triticum aestivum (Wheat) protein is Photosystem II CP47 reaction center protein.